A 70-amino-acid chain; its full sequence is ATP synthase subunit c (70 aa).

2 helical membrane passes run 4 to 24 and 48 to 68; these read IAAGIALCGSAIGAGIGNGML and ISMALVEAMPIIVIAMSFVLI.

Belongs to the ATPase C chain family. As to quaternary structure, F-type ATPases have 2 components, F(1) - the catalytic core - and F(0) - the membrane proton channel. F(1) has five subunits: alpha(3), beta(3), gamma(1), delta(1), epsilon(1). F(0) has three main subunits: a(1), b(2) and c(10-14). The alpha and beta chains form an alternating ring which encloses part of the gamma chain. F(1) is attached to F(0) by a central stalk formed by the gamma and epsilon chains, while a peripheral stalk is formed by the delta and b chains.

The protein resides in the cell membrane. In terms of biological role, f(1)F(0) ATP synthase produces ATP from ADP in the presence of a proton or sodium gradient. F-type ATPases consist of two structural domains, F(1) containing the extramembraneous catalytic core and F(0) containing the membrane proton channel, linked together by a central stalk and a peripheral stalk. During catalysis, ATP synthesis in the catalytic domain of F(1) is coupled via a rotary mechanism of the central stalk subunits to proton translocation. Key component of the F(0) channel; it plays a direct role in translocation across the membrane. A homomeric c-ring of between 10-14 subunits forms the central stalk rotor element with the F(1) delta and epsilon subunits. This chain is ATP synthase subunit c, found in Oenococcus oeni (strain ATCC BAA-331 / PSU-1).